Consider the following 130-residue polypeptide: Small ribosomal subunit protein uS9 (130 aa).

Belongs to the universal ribosomal protein uS9 family.

The protein is Small ribosomal subunit protein uS9 of Tolumonas auensis (strain DSM 9187 / NBRC 110442 / TA 4).